Here is a 267-residue protein sequence, read N- to C-terminus: 3-methyl-2-oxobutanoate hydroxymethyltransferase (267 aa).

Mg(2+)-binding residues include aspartate 45 and aspartate 84. Residues 45 to 46 (DS), aspartate 84, and lysine 113 contribute to the 3-methyl-2-oxobutanoate site. Glutamate 115 lines the Mg(2+) pocket. Catalysis depends on glutamate 182, which acts as the Proton acceptor.

This sequence belongs to the PanB family. In terms of assembly, homodecamer; pentamer of dimers. Mg(2+) serves as cofactor.

It localises to the cytoplasm. It catalyses the reaction 3-methyl-2-oxobutanoate + (6R)-5,10-methylene-5,6,7,8-tetrahydrofolate + H2O = 2-dehydropantoate + (6S)-5,6,7,8-tetrahydrofolate. It participates in cofactor biosynthesis; coenzyme A biosynthesis. Its function is as follows. Catalyzes the reversible reaction in which hydroxymethyl group from 5,10-methylenetetrahydrofolate is transferred onto alpha-ketoisovalerate to form ketopantoate. This Saccharolobus islandicus (strain L.S.2.15 / Lassen #1) (Sulfolobus islandicus) protein is 3-methyl-2-oxobutanoate hydroxymethyltransferase.